Reading from the N-terminus, the 142-residue chain is Hemoglobin subunit alpha (142 aa).

One can recognise a Globin domain in the interval valine 2–arginine 142. A Phosphoserine modification is found at serine 4. N6-succinyllysine occurs at positions 8 and 12. Lysine 17 is modified (N6-acetyllysine; alternate). N6-succinyllysine; alternate is present on lysine 17. Tyrosine 25 bears the Phosphotyrosine mark. Phosphoserine is present on serine 36. Lysine 41 carries the post-translational modification N6-succinyllysine. A Phosphoserine modification is found at serine 50. Histidine 59 contributes to the O2 binding site. Residue histidine 88 coordinates heme b. At threonine 109 the chain carries Phosphothreonine. Phosphoserine occurs at positions 125 and 132. Threonine 135 and threonine 138 each carry phosphothreonine. A Phosphoserine modification is found at serine 139.

This sequence belongs to the globin family. In terms of assembly, heterotetramer of two alpha chains and two beta chains. As to expression, red blood cells.

In terms of biological role, involved in oxygen transport from the lung to the various peripheral tissues. Hemopressin acts as an antagonist peptide of the cannabinoid receptor CNR1. Hemopressin-binding efficiently blocks cannabinoid receptor CNR1 and subsequent signaling. The sequence is that of Hemoglobin subunit alpha (HBA) from Cricetomys gambianus (Northern giant pouched rat).